Here is a 211-residue protein sequence, read N- to C-terminus: Calaxin (211 aa).

EF-hand domains follow at residues 64-99 (TDDM…FLRG), 100-135 (SLEE…SLLK), and 145-180 (GIKD…ETLL). The Ca(2+) site is built by D77, D79, D81, C83, E88, D113, N115, D117, E124, D158, D160, D162, K164, and D169.

Component of the outer dynein arm-docking complex along with ODAD1, ODAD2, ODAD3 and ODAD4. Strong expression in the respiratory epithelium. Expressed in the sperm.

Its subcellular location is the cytoplasm. It is found in the cytoskeleton. The protein resides in the cilium axoneme. It localises to the cell projection. The protein localises to the cilium. Its subcellular location is the flagellum. Its function is as follows. Component of the outer dynein arm-docking complex (ODA-DC) that mediates outer dynein arms (ODA) binding onto the doublet microtubule. Seems to regulate the assembly of both ODAs and their axonemal docking complex onto ciliary microtubules. Regulates ciliary and flagellar motility and is required for cilia-driven determination of body laterality. This is Calaxin from Homo sapiens (Human).